The following is a 408-amino-acid chain: Glutamate N-acetyltransferase (408 aa).

Substrate-binding residues include Thr-150, Lys-176, Thr-189, Glu-271, Asn-403, and Thr-408. Residue Thr-189 is the Nucleophile of the active site.

This sequence belongs to the ArgJ family. In terms of assembly, heterotetramer of two alpha and two beta chains.

Its subcellular location is the cytoplasm. It carries out the reaction N(2)-acetyl-L-ornithine + L-glutamate = N-acetyl-L-glutamate + L-ornithine. The protein operates within amino-acid biosynthesis; L-arginine biosynthesis; L-ornithine and N-acetyl-L-glutamate from L-glutamate and N(2)-acetyl-L-ornithine (cyclic): step 1/1. Catalyzes the transfer of the acetyl group from N(2)-acetylornithine to glutamate, forming N-acetylglutamate and L-ornithine. The chain is Glutamate N-acetyltransferase from Methanococcus maripaludis (strain C6 / ATCC BAA-1332).